The sequence spans 163 residues: Beta-lactoglobulin-2 (163 aa).

Cystine bridges form between Cys66–Cys161 and Cys106–Cys120.

The protein belongs to the calycin superfamily. Lipocalin family. Monomer.

It is found in the secreted. Functionally, lactoglobulin is the primary component of whey, it binds retinol and is probably involved in the transport of that molecule. This chain is Beta-lactoglobulin-2 (LGB2), found in Equus asinus (Donkey).